Consider the following 311-residue polypeptide: Protease HtpX homolog 1 (311 aa).

Transmembrane regions (helical) follow at residues 12 to 32 and 35 to 55; these read IIAL…IINF and FPVI…WLIS. His-137 is a Zn(2+) binding site. The active site involves Glu-138. Position 141 (His-141) interacts with Zn(2+). Helical transmembrane passes span 159–179 and 184–204; these read ILGF…IFAV and ILVG…TFFL. Glu-216 is a Zn(2+) binding site.

This sequence belongs to the peptidase M48B family. Zn(2+) is required as a cofactor.

It is found in the cell membrane. This Sulfurisphaera tokodaii (strain DSM 16993 / JCM 10545 / NBRC 100140 / 7) (Sulfolobus tokodaii) protein is Protease HtpX homolog 1.